A 294-amino-acid chain; its full sequence is Putative sugar lactone lactonase (294 aa).

A divalent metal cation contacts are provided by E21, N150, and D201. D201 serves as the catalytic Proton donor/acceptor.

The protein belongs to the SMP-30/CGR1 family. A divalent metal cation is required as a cofactor.

Its function is as follows. Involved in the degradation of galactose via the DeLey-Doudoroff pathway. The chain is Putative sugar lactone lactonase from Rhizobium meliloti (strain 1021) (Ensifer meliloti).